The chain runs to 337 residues: Anthranilate phosphoribosyltransferase (337 aa).

5-phospho-alpha-D-ribose 1-diphosphate is bound by residues Gly-81, 84–85 (GD), Ser-89, 91–94 (NVST), 109–117 (KHGNRAATS), and Ala-121. Gly-81 lines the anthranilate pocket. Ser-93 is a binding site for Mg(2+). Asn-112 contributes to the anthranilate binding site. Anthranilate is bound at residue Arg-167. Residues Asp-226 and Glu-227 each contribute to the Mg(2+) site.

The protein belongs to the anthranilate phosphoribosyltransferase family. Homodimer. Requires Mg(2+) as cofactor.

The enzyme catalyses N-(5-phospho-beta-D-ribosyl)anthranilate + diphosphate = 5-phospho-alpha-D-ribose 1-diphosphate + anthranilate. The protein operates within amino-acid biosynthesis; L-tryptophan biosynthesis; L-tryptophan from chorismate: step 2/5. Catalyzes the transfer of the phosphoribosyl group of 5-phosphorylribose-1-pyrophosphate (PRPP) to anthranilate to yield N-(5'-phosphoribosyl)-anthranilate (PRA). The protein is Anthranilate phosphoribosyltransferase of Methylorubrum extorquens (strain CM4 / NCIMB 13688) (Methylobacterium extorquens).